The sequence spans 591 residues: Protein kinase C zeta type (591 aa).

The PB1 domain maps to 15-98 (RVRLKAHYSG…DGLILHVFPS (84 aa)). The interval 79–145 (AFRLAGQHRD…KRFNRRAYCG (67 aa)) is interaction with SQSTM1. The Phorbol-ester/DAG-type zinc-finger motif lies at 130-180 (GHLFQAKRFNRRAYCGQCSERIWGLARQGYRCINCKLLVHKRCHGLVPLTC). The Protein kinase domain occupies 251 to 517 (FDLIRVIGRG…FSDIKSHAFF (267 aa)). Residues 257 to 265 (IGRGSYAKV) and lysine 280 contribute to the ATP site. The Proton acceptor role is filled by aspartate 375. Position 409 is a phosphothreonine; by PDPK1 and PI3K (threonine 409). The 72-residue stretch at 518–589 (RSIDWDLLEK…INPLLLSTEE (72 aa)) folds into the AGC-kinase C-terminal domain. Position 559 is a phosphothreonine (threonine 559). Serine 590 is subject to Phosphoserine.

This sequence belongs to the protein kinase superfamily. AGC Ser/Thr protein kinase family. PKC subfamily. In terms of assembly, interacts with PARD6A, PARD6B and PARD6G. Part of a complex with PARD3, PARD6A or PARD6B or PARD6G and CDC42 or RAC1. Interacts with ADAP1/CENTA1. Interacts directly with SQSTM1. Forms a ternary complex with SQSTM1 and KCNAB2. Forms another ternary complex with SQSTM1 and GABRR3. Forms a complex with SQSTM1 and MAP2K5. Interacts (via the protein kinase domain) with WWC1. Forms a tripartite complex with WWC1 and DDR1, but predominantly in the absence of collagen. Component of the Par polarity complex, composed of at least phosphorylated PRKCZ, PARD3 and TIAM1. Interacts with PDPK1 (via N-terminal region). Interacts with WDFY2 (via WD repeats 1-3). Interacts with VAMP2. Forms a complex with WDFY2 and VAMP2. Interacts with APPL1. Interacts with WWC1, WWC2 and WWC3. Post-translationally, CDH5 is required for its phosphorylation at Thr-409. Phosphorylated by protein kinase PDPK1; phosphorylation is inhibited by the apoptotic C-terminal cleavage product of PKN2. Phosphorylation at Thr-409 by PI3K activates the kinase.

It is found in the cytoplasm. It localises to the endosome. The protein resides in the cell junction. Its subcellular location is the membrane. It catalyses the reaction L-seryl-[protein] + ATP = O-phospho-L-seryl-[protein] + ADP + H(+). It carries out the reaction L-threonyl-[protein] + ATP = O-phospho-L-threonyl-[protein] + ADP + H(+). With respect to regulation, atypical PKCs (PRKCI and PRKCZ) exhibit an elevated basal enzymatic activity (that may be due to the interaction with SMG1 or SQSTM1) and are not regulated by diacylglycerol, phosphatidylserine, phorbol esters or calcium ions. Two specific sites, Thr-409 (activation loop of the kinase domain) and Thr-559 (turn motif), need to be phosphorylated for its full activation. Phosphatidylinositol 3,4,5-trisphosphate might be a physiological activator. Functionally, calcium- and diacylglycerol-independent serine/threonine-protein kinase that functions in phosphatidylinositol 3-kinase (PI3K) pathway and mitogen-activated protein (MAP) kinase cascade, and is involved in NF-kappa-B activation, mitogenic signaling, cell proliferation, cell polarity, inflammatory response and maintenance of long-term potentiation (LTP). Upon lipopolysaccharide (LPS) treatment in macrophages, or following mitogenic stimuli, functions downstream of PI3K to activate MAP2K1/MEK1-MAPK1/ERK2 signaling cascade independently of RAF1 activation. Required for insulin-dependent activation of AKT3, but may function as an adapter rather than a direct activator. Upon insulin treatment may act as a downstream effector of PI3K and contribute to the activation of translocation of the glucose transporter SLC2A4/GLUT4 and subsequent glucose transport in adipocytes. In EGF-induced cells, binds and activates MAP2K5/MEK5-MAPK7/ERK5 independently of its kinase activity and can activate JUN promoter through MEF2C. Through binding with SQSTM1/p62, functions in interleukin-1 signaling and activation of NF-kappa-B with the specific adapters RIPK1 and TRAF6. Participates in TNF-dependent transactivation of NF-kappa-B by phosphorylating and activating IKBKB kinase, which in turn leads to the degradation of NF-kappa-B inhibitors. In migrating astrocytes, forms a cytoplasmic complex with PARD6A and is recruited by CDC42 to function in the establishment of cell polarity along with the microtubule motor and dynein. In association with FEZ1, stimulates neuronal differentiation in PC12 cells. In the inflammatory response, is required for the T-helper 2 (Th2) differentiation process, including interleukin production, efficient activation of JAK1 and the subsequent phosphorylation and nuclear translocation of STAT6. May be involved in development of allergic airway inflammation (asthma), a process dependent on Th2 immune response. In the NF-kappa-B-mediated inflammatory response, can relieve SETD6-dependent repression of NF-kappa-B target genes by phosphorylating the RELA subunit at 'Ser-311'. Phosphorylates VAMP2 in vitro. Phosphorylates and activates LRRK1, which phosphorylates RAB proteins involved in intracellular trafficking. This Oryctolagus cuniculus (Rabbit) protein is Protein kinase C zeta type (PRKCZ).